The primary structure comprises 491 residues: UDP-N-acetylmuramoyl-L-alanyl-D-glutamate--2,6-diaminopimelate ligase (491 aa).

S30 contributes to the UDP-N-acetyl-alpha-D-muramoyl-L-alanyl-D-glutamate binding site. Position 108–114 (108–114 (GTNGKTT)) interacts with ATP. UDP-N-acetyl-alpha-D-muramoyl-L-alanyl-D-glutamate-binding positions include N149, 150-151 (TT), S177, Q183, and R185. N6-carboxylysine is present on K217. Residues R383, 407–410 (DNPR), G458, and E462 contribute to the meso-2,6-diaminopimelate site. Positions 407–410 (DNPR) match the Meso-diaminopimelate recognition motif motif.

Belongs to the MurCDEF family. MurE subfamily. Requires Mg(2+) as cofactor. Carboxylation is probably crucial for Mg(2+) binding and, consequently, for the gamma-phosphate positioning of ATP.

The protein localises to the cytoplasm. The catalysed reaction is UDP-N-acetyl-alpha-D-muramoyl-L-alanyl-D-glutamate + meso-2,6-diaminopimelate + ATP = UDP-N-acetyl-alpha-D-muramoyl-L-alanyl-gamma-D-glutamyl-meso-2,6-diaminopimelate + ADP + phosphate + H(+). It participates in cell wall biogenesis; peptidoglycan biosynthesis. Catalyzes the addition of meso-diaminopimelic acid to the nucleotide precursor UDP-N-acetylmuramoyl-L-alanyl-D-glutamate (UMAG) in the biosynthesis of bacterial cell-wall peptidoglycan. The polypeptide is UDP-N-acetylmuramoyl-L-alanyl-D-glutamate--2,6-diaminopimelate ligase (Listeria monocytogenes serovar 1/2a (strain ATCC BAA-679 / EGD-e)).